Consider the following 668-residue polypeptide: Pentatricopeptide repeat-containing protein CRP1, chloroplastic (668 aa).

A chloroplast-targeting transit peptide spans 1-64; sequence MPASLLPPTF…SASLTSPSPP (64 aa). PPR repeat units follow at residues 154 to 188, 189 to 226, 227 to 261, 262 to 297, 298 to 332, 333 to 367, 368 to 402, 403 to 437, 438 to 472, 473 to 507, 508 to 542, 543 to 577, 578 to 612, and 613 to 647; these read SPLL…DFLP, DLAS…RLEP, DAPL…GLTP, RSNA…EIKP, RTRA…GVAP, DEAT…GVKP, SSYV…GVRP, DRHF…GIEP, DVVT…NCPP, GTTT…GLVP, NIIT…GLKP, SPTM…GLEV, SILV…GLRP, and DVIT…GCAP.

Belongs to the PPR family. P subfamily. As to quaternary structure, component of a multisubunit complex.

Its subcellular location is the plastid. The protein resides in the chloroplast stroma. In terms of biological role, required for the translation of the chloroplast petA and petD mRNAs. Required for the processing of the petD mRNA from a polycistronic precursor. Binds with high affinity to the 5'-UTR of the chloroplastic petA transcript. Activates psaC and petA translation by binding their 5'-UTRs. The sequence is that of Pentatricopeptide repeat-containing protein CRP1, chloroplastic from Zea mays (Maize).